The primary structure comprises 640 residues: 1-deoxy-D-xylulose-5-phosphate synthase (640 aa).

Residues histidine 79 and alanine 120–serine 122 contribute to the thiamine diphosphate site. A Mg(2+)-binding site is contributed by aspartate 151. Residues glycine 152 to alanine 153, asparagine 180, tyrosine 289, and glutamate 371 each bind thiamine diphosphate. Asparagine 180 provides a ligand contact to Mg(2+).

This sequence belongs to the transketolase family. DXPS subfamily. As to quaternary structure, homodimer. Requires Mg(2+) as cofactor. It depends on thiamine diphosphate as a cofactor.

It carries out the reaction D-glyceraldehyde 3-phosphate + pyruvate + H(+) = 1-deoxy-D-xylulose 5-phosphate + CO2. It participates in metabolic intermediate biosynthesis; 1-deoxy-D-xylulose 5-phosphate biosynthesis; 1-deoxy-D-xylulose 5-phosphate from D-glyceraldehyde 3-phosphate and pyruvate: step 1/1. Its function is as follows. Catalyzes the acyloin condensation reaction between C atoms 2 and 3 of pyruvate and glyceraldehyde 3-phosphate to yield 1-deoxy-D-xylulose-5-phosphate (DXP). The protein is 1-deoxy-D-xylulose-5-phosphate synthase of Erythrobacter litoralis (strain HTCC2594).